Reading from the N-terminus, the 394-residue chain is Probable peptidoglycan glycosyltransferase FtsW (394 aa).

Residues 1–27 lie on the Cytoplasmic side of the membrane; sequence MEFLQNIKKNYDEWTRITPQGLLYDRA. Residues 28–48 traverse the membrane as a helical segment; the sequence is LFWLFVILLLIGLVAVTSASI. Topologically, residues 49-66 are periplasmic; it reads PYSSRLFNDPFYFAKRDA. The helical transmembrane segment at 67 to 87 threads the bilayer; it reads IYVLLSLLTCYISLQISSSQW. Topologically, residues 88-93 are cytoplasmic; that stretch reads EKWHAK. A helical transmembrane segment spans residues 94–114; it reads IFLFSVILLLLVPFIGTSVNG. Residues 115–120 are Periplasmic-facing; the sequence is AKRWIS. A helical membrane pass occupies residues 121–141; sequence LGILNFQPAEFAKLALTCFLA. Residues 142-155 lie on the Cytoplasmic side of the membrane; sequence SYFTRRYDEVRSRH. Transmembrane regions (helical) follow at residues 156–176 and 177–197; these read VSIF…LLQP and DLGS…IVGA. Position 198 (K198) is a topological domain, cytoplasmic. A helical transmembrane segment spans residues 199-219; it reads ILQFVGLIALGGILFVWLVLT. Residues 220-277 are Periplasmic-facing; it reads ASYRLKRFIGFLEPFKEPYGTGFQLTNSLIAFGRGEITGEGLGNSIQKLDYLPEAHTD. A helical membrane pass occupies residues 278 to 298; sequence FIMAIIGEEFGFIGILIVILL. Topologically, residues 299-322 are cytoplasmic; sequence LGLLIFRAMKIGRESLMLEQRFRG. Residues 323–343 form a helical membrane-spanning segment; sequence FFALGIGFWIFFQGFVNLGMA. Residues 344–353 are Periplasmic-facing; the sequence is LGMLPTKGLT. The chain crosses the membrane as a helical span at residues 354–374; it reads FPLVSYGGSSIIIMSATIGIL. Over 375 to 394 the chain is Cytoplasmic; that stretch reads LRIDHENRLFRIGQARLRDD.

It belongs to the SEDS family. FtsW subfamily.

Its subcellular location is the cell inner membrane. It catalyses the reaction [GlcNAc-(1-&gt;4)-Mur2Ac(oyl-L-Ala-gamma-D-Glu-L-Lys-D-Ala-D-Ala)](n)-di-trans,octa-cis-undecaprenyl diphosphate + beta-D-GlcNAc-(1-&gt;4)-Mur2Ac(oyl-L-Ala-gamma-D-Glu-L-Lys-D-Ala-D-Ala)-di-trans,octa-cis-undecaprenyl diphosphate = [GlcNAc-(1-&gt;4)-Mur2Ac(oyl-L-Ala-gamma-D-Glu-L-Lys-D-Ala-D-Ala)](n+1)-di-trans,octa-cis-undecaprenyl diphosphate + di-trans,octa-cis-undecaprenyl diphosphate + H(+). It functions in the pathway cell wall biogenesis; peptidoglycan biosynthesis. In terms of biological role, peptidoglycan polymerase that is essential for cell division. This chain is Probable peptidoglycan glycosyltransferase FtsW, found in Haemophilus influenzae (strain ATCC 51907 / DSM 11121 / KW20 / Rd).